The primary structure comprises 143 residues: Transcription antitermination protein NusB (143 aa).

This sequence belongs to the NusB family.

Involved in transcription antitermination. Required for transcription of ribosomal RNA (rRNA) genes. Binds specifically to the boxA antiterminator sequence of the ribosomal RNA (rrn) operons. The polypeptide is Transcription antitermination protein NusB (Desulfatibacillum aliphaticivorans).